The chain runs to 174 residues: Adipose-secreted signaling protein (174 aa).

Residue A2 is modified to N-acetylalanine. T147 is subject to Phosphothreonine.

Belongs to the ADISSP family.

The protein resides in the secreted. Functionally, adipocyte-secreted protein (adipokine) that acts as a key regulator for white adipose tissue (WAT) thermogenesis and glucose homeostasis at least in part through activation of protein kinase A (PKA). The protein is Adipose-secreted signaling protein of Rattus norvegicus (Rat).